We begin with the raw amino-acid sequence, 693 residues long: MLKLFSAFRKDRIWDFDGGIHPPEMKTQSSQTPLRQISLPEQFIIPLKQHLGPEGEICVSVGDKVLRGQPLTRGKGRTLPVHAPTSGTVNAIRQHTTAHPSGLSELSIIIVPDGEDRWCERLTYRDYRAQSVDTLLAHLHQAGIAGLGGAGFPTAAKLQGGMRGIETLIINGAECEPYITADDRLMQECADEIIQGVEILSFLLQPKRILIGIEDNKPEAISALRLALGKRSDMQLRVIPTKYPSGGAKQLTKILTGKEVPFGKHSAAIGVLMQNVGTAYAIKRAVIDGEPLTERVVTLTGEALRQPGNVWARLGTPVRHLLKQGGFHVTKQPMVVMGGPLMGFTLPLLDVPIVKISNCLLAPSHSEMEPVAEEQSCIRCSKCADACPAGLLPQQLYWFSRGQEHEKARDHHLFDCIECGACAYVCPSNIPLVQYYRQEKAEIRAIDEDAQRAALAKVRFDAKQARLEREKAARELRHKQAAAGVSTSDKDAVQAALERVRRKQTAEAEIGSPITVIPDAQPDNSAAIAARAAHKALVREERVREKQSQQETPATEVTPEELDPRKAAVAAALARVKARKAAQQSELNTTESVSSAIPDTAAEPIAVVEAQEQEDPRKAAVAAAIARVKARKAAQQLVTNVEAAVPVVTETTAEPIAVVEVQEPEDPRKAAVAAAIARVKARKAAQASSYQEE.

2 4Fe-4S ferredoxin-type domains span residues 368–397 (MEPVAEEQSCIRCSKCADACPAGLLPQQLY) and 407–436 (KARDHHLFDCIECGACAYVCPSNIPLVQYY). The [4Fe-4S] cluster site is built by C377, C380, C383, C387, C416, C419, C422, and C426. The span at 539–548 (REERVREKQS) shows a compositional bias: basic and acidic residues. The segment at 539 to 564 (REERVREKQSQQETPATEVTPEELDP) is disordered.

This sequence belongs to the 4Fe4S bacterial-type ferredoxin family. RnfC subfamily. The complex is composed of six subunits: RnfA, RnfB, RnfC, RnfD, RnfE and RnfG. The cofactor is [4Fe-4S] cluster.

The protein localises to the cell inner membrane. Functionally, part of a membrane-bound complex that couples electron transfer with translocation of ions across the membrane. In Pectobacterium atrosepticum (strain SCRI 1043 / ATCC BAA-672) (Erwinia carotovora subsp. atroseptica), this protein is Ion-translocating oxidoreductase complex subunit C.